The primary structure comprises 467 residues: MLTATKDLVLAQSDNSWPTHFRASLYLGVPFIGAQLAQLAINTTDVLMVGQLGATQLAAIILATQVFFTIFIFGSGFANAVVPMVAQAQGRGDQVSVRRSVRMGMWVVLLYGVLTAPVLWMAEPILLFAGQKPEVAALAGEYLHIAQWAIFPSLIFMVLRAFLSGLERAGVILYVTLVTLVLNAALCYVLIFGHFGFPELGIFGAAVAALGVALLGAALTIGYIRRQPELHRFELFVRFWRPDWPAFGEVVHLGIPISVTILAEVSLFTVASLLMGTIGTIELAAHGIALQFASIAFMIPLGLAQAGTVRIGLAYGSGDMVGVKRAAIAVLTLGVGFAAVGSTIFALFPHELAGLYLDTRRPDAAEVLAFAGPLIVIAGAFQLVDGLQAIAAGMLRGLKDTTIPMILAMIAYWPIGFFCAWAFAFPLGFGGVGVWFGFVLGLASAALLLNWRFFRLLRRVSAAPAAS.

Helical transmembrane passes span 20–42 (HFRA…LAIN), 57–79 (LAAI…GFAN), 107–129 (VVLL…LLFA), 144–163 (HIAQ…RAFL), 170–192 (GVIL…VLIF), 202–224 (IFGA…IGYI), 250–272 (VVHL…TVAS), 292–314 (FASI…IGLA), 326–348 (AAIA…FALF), 368–390 (LAFA…LQAI), 403–425 (IPMI…AFAF), and 429–451 (FGGV…LLNW).

The protein belongs to the multi antimicrobial extrusion (MATE) (TC 2.A.66.1) family.

It is found in the cell inner membrane. Functionally, multidrug efflux pump. In Rhizobium meliloti (strain 1021) (Ensifer meliloti), this protein is Probable multidrug resistance protein NorM (norM).